The sequence spans 194 residues: dCTP deaminase (194 aa).

DCTP contacts are provided by residues 110–115 (RSSLAR), D128, 136–138 (VLE), Y171, K178, and Q182. E138 functions as the Proton donor/acceptor in the catalytic mechanism.

This sequence belongs to the dCTP deaminase family. In terms of assembly, homotrimer.

It catalyses the reaction dCTP + H2O + H(+) = dUTP + NH4(+). It functions in the pathway pyrimidine metabolism; dUMP biosynthesis; dUMP from dCTP (dUTP route): step 1/2. Catalyzes the deamination of dCTP to dUTP. This is dCTP deaminase from Histophilus somni (strain 2336) (Haemophilus somnus).